Consider the following 420-residue polypeptide: Pre-mRNA-splicing factor RBM22 (420 aa).

At Ala-2 the chain carries N-acetylalanine. Ser-4 and Ser-102 each carry phosphoserine. Glycyl lysine isopeptide (Lys-Gly) (interchain with G-Cter in SUMO2) cross-links involve residues Lys-139 and Lys-149. The C3H1-type zinc finger occupies 159–186 (RNRPHICSFWVKGECKRGEECPYRHEKP). Residue Lys-212 is modified to N6-acetyllysine. The RRM domain occupies 232–305 (TTLYVGGLGD…RRLNVKWGRS (74 aa)). Residue Lys-290 forms a Glycyl lysine isopeptide (Lys-Gly) (interchain with G-Cter in SUMO2) linkage. Disordered stretches follow at residues 303-343 (GRSQ…AAEE) and 372-420 (APPP…HSSP). Residues 309-318 (RGKEKEKDGT) show a composition bias toward basic and acidic residues.

This sequence belongs to the SLT11 family. In terms of assembly, component of the pre-catalytic and catalytic spliceosome complexes. Component of the postcatalytic spliceosome P complex. Interacts with PDCD6; the interaction induces translocation of PDCD6 in the cytoplasm. Interacts with PPIL1.

It localises to the nucleus. The protein localises to the cytoplasm. Its function is as follows. Required for pre-mRNA splicing as component of the activated spliceosome. Involved in the first step of pre-mRNA splicing. Binds directly to the internal stem-loop (ISL) domain of the U6 snRNA and to the pre-mRNA intron near the 5' splice site during the activation and catalytic phases of the spliceosome cycle. Involved in both translocations of the nuclear SLU7 to the cytoplasm and the cytosolic calcium-binding protein PDCD6 to the nucleus upon cellular stress responses. The polypeptide is Pre-mRNA-splicing factor RBM22 (RBM22) (Homo sapiens (Human)).